A 316-amino-acid chain; its full sequence is Probable cell division protein WhiA (316 aa).

The H-T-H motif DNA-binding region spans 276–309 (SLEELGKIAEPQITKDAIAGRIRRLLQLAEKTEK).

Belongs to the WhiA family.

Functionally, involved in cell division and chromosome segregation. In Bifidobacterium longum (strain NCC 2705), this protein is Probable cell division protein WhiA.